Reading from the N-terminus, the 438-residue chain is Glutamyl-tRNA reductase (438 aa).

Substrate-binding positions include 49–52, Ser109, 114–116, and Gln120; these read TCNR and EGQ. The active-site Nucleophile is Cys50. Residue 197-202 participates in NADP(+) binding; that stretch reads GAGKMS.

The protein belongs to the glutamyl-tRNA reductase family. As to quaternary structure, homodimer.

The catalysed reaction is (S)-4-amino-5-oxopentanoate + tRNA(Glu) + NADP(+) = L-glutamyl-tRNA(Glu) + NADPH + H(+). It participates in porphyrin-containing compound metabolism; protoporphyrin-IX biosynthesis; 5-aminolevulinate from L-glutamyl-tRNA(Glu): step 1/2. The protein operates within porphyrin-containing compound metabolism; chlorophyll biosynthesis. Its function is as follows. Catalyzes the NADPH-dependent reduction of glutamyl-tRNA(Glu) to glutamate 1-semialdehyde (GSA). The protein is Glutamyl-tRNA reductase of Synechococcus elongatus (strain ATCC 33912 / PCC 7942 / FACHB-805) (Anacystis nidulans R2).